Here is a 715-residue protein sequence, read N- to C-terminus: MAAELPFYIASSVEELVKKHVEGVEVDKNYSIFHYLSTCNNLVKQADIYKSEGDIERTYIYSLRFCILIFEKLQKHPDFNKESFTKSRNEIKRKAELKLKELEGLKETLKKGYERIQHKKEEERKRIEREKEKERIFKQEKLKLEREQQLLREEEEQRKREDLELESEIQRLKEVEDFENRKLQAQKNIKRATSARTFELLRQEALLEERKRLQGIETEKKRILAEKQEALEKEFQQQLFEQQEKERLEKERLEKEEQLRLASLPPPPPDYSSFDSDQLLNLIENNNKKLENNNQTDDKLDNEFLLDPSFLPPPPPIITQPSPSQEKKDNNNNNNNKNTTAQLPLSITQPPHMPNNEKKLPPIYNSTSPIQFGYPSLNNSVNNPPSFSLQNNTPLIQQYKQQQQQQPIQSPTNNINRPNIPQYNNYNAKPLSSNLNPLPPQYQPQQQQQYQQQQQQQQYQQQQQYQQQQQQQQQQQQQQQHQLPKLPQYQPIENKSISANGLAQSPAVNTPSITPTTNKPNIDSSEASKKYSKLRKIIVHGEVFQEFMRLAENNTKRSIETCGILSGTLSNDVFRITTIIIPKQEGTTDTCNTIEEHEIFEYQLENDLLTLGWIHTHPTQDCFLSAVDVHTHCSYQYLLQEAIAVVISPMANPNFGIFRLTDPPGLETVQKCKLKSFHPHPPVNGIPIYTKVDHVDLIWGKKSDSKVVDLRFLKK.

A coiled-coil region spans residues 86-302 (KSRNEIKRKA…NNQTDDKLDN (217 aa)). Positions 287–302 (NKKLENNNQTDDKLDN) are enriched in basic and acidic residues. Disordered stretches follow at residues 287 to 367 (NKKL…YNST), 398 to 450 (QYKQ…QQQY), and 502 to 527 (LAQS…SSEA). Residues 339–349 (TTAQLPLSITQ) are compositionally biased toward polar residues. The span at 398-409 (QYKQQQQQQPIQ) shows a compositional bias: low complexity. Composition is skewed to polar residues over residues 410–427 (SPTN…NNYN) and 502–525 (LAQS…IDSS). One can recognise an MPN domain in the interval 537–666 (IIVHGEVFQE…IFRLTDPPGL (130 aa)). His615, His617, Asp628, His630, Cys672, His678, and His680 together coordinate Zn(2+). Residues 615-628 (HTHPTQDCFLSAVD) carry the JAMM motif motif.

It belongs to the peptidase M67C family. Requires Zn(2+) as cofactor.

Functionally, may be a zinc metalloprotease that specifically cleaves ubiquitin chains. This Dictyostelium discoideum (Social amoeba) protein is Probable ubiquitin thioesterase DG1039 (DG1039).